The primary structure comprises 216 residues: Adenylate kinase (216 aa).

10 to 15 (GAGKGT) is an ATP binding site. The NMP stretch occupies residues 30–59 (STGDMLREAVKADTPLGIEAKKVMDVGGLI). AMP-binding positions include Thr31, Arg36, 57 to 59 (GLI), 85 to 88 (GFPR), and Gln92. The interval 122–159 (GRRAHLTSGRTYHIVYNPPKVEGIDDITGEELIQRTDD) is LID. Residues Arg123 and 132 to 133 (TY) each bind ATP. 2 residues coordinate AMP: Arg156 and Arg167. Gly202 contacts ATP.

It belongs to the adenylate kinase family. In terms of assembly, monomer.

Its subcellular location is the cytoplasm. The enzyme catalyses AMP + ATP = 2 ADP. The protein operates within purine metabolism; AMP biosynthesis via salvage pathway; AMP from ADP: step 1/1. Its function is as follows. Catalyzes the reversible transfer of the terminal phosphate group between ATP and AMP. Plays an important role in cellular energy homeostasis and in adenine nucleotide metabolism. The protein is Adenylate kinase of Ruthia magnifica subsp. Calyptogena magnifica.